The sequence spans 187 residues: Elongation factor P (187 aa).

The protein belongs to the elongation factor P family.

The protein localises to the cytoplasm. It participates in protein biosynthesis; polypeptide chain elongation. Involved in peptide bond synthesis. Stimulates efficient translation and peptide-bond synthesis on native or reconstituted 70S ribosomes in vitro. Probably functions indirectly by altering the affinity of the ribosome for aminoacyl-tRNA, thus increasing their reactivity as acceptors for peptidyl transferase. This chain is Elongation factor P, found in Ruegeria pomeroyi (strain ATCC 700808 / DSM 15171 / DSS-3) (Silicibacter pomeroyi).